A 252-amino-acid chain; its full sequence is Triosephosphate isomerase (252 aa).

10-12 (NWK) lines the substrate pocket. Catalysis depends on histidine 96, which acts as the Electrophile. Glutamate 168 acts as the Proton acceptor in catalysis. Residues glycine 174, serine 214, and 235 to 236 (GG) each bind substrate.

This sequence belongs to the triosephosphate isomerase family. Homodimer.

It localises to the cytoplasm. It catalyses the reaction D-glyceraldehyde 3-phosphate = dihydroxyacetone phosphate. It participates in carbohydrate biosynthesis; gluconeogenesis. It functions in the pathway carbohydrate degradation; glycolysis; D-glyceraldehyde 3-phosphate from glycerone phosphate: step 1/1. In terms of biological role, involved in the gluconeogenesis. Catalyzes stereospecifically the conversion of dihydroxyacetone phosphate (DHAP) to D-glyceraldehyde-3-phosphate (G3P). In Streptococcus pyogenes serotype M2 (strain MGAS10270), this protein is Triosephosphate isomerase.